The following is a 250-amino-acid chain: tRNA (guanine-N(1)-)-methyltransferase (250 aa).

Residues Gly-112 and 132-137 contribute to the S-adenosyl-L-methionine site; that span reads IGDFVL.

Belongs to the RNA methyltransferase TrmD family. In terms of assembly, homodimer.

Its subcellular location is the cytoplasm. It catalyses the reaction guanosine(37) in tRNA + S-adenosyl-L-methionine = N(1)-methylguanosine(37) in tRNA + S-adenosyl-L-homocysteine + H(+). Specifically methylates guanosine-37 in various tRNAs. The polypeptide is tRNA (guanine-N(1)-)-methyltransferase (Marinomonas sp. (strain MWYL1)).